The following is a 100-amino-acid chain: Large ribosomal subunit protein uL23 (100 aa).

This sequence belongs to the universal ribosomal protein uL23 family. In terms of assembly, part of the 50S ribosomal subunit. Contacts protein L29, and trigger factor when it is bound to the ribosome.

In terms of biological role, one of the early assembly proteins it binds 23S rRNA. One of the proteins that surrounds the polypeptide exit tunnel on the outside of the ribosome. Forms the main docking site for trigger factor binding to the ribosome. This Prochlorococcus marinus subsp. pastoris (strain CCMP1986 / NIES-2087 / MED4) protein is Large ribosomal subunit protein uL23.